Here is a 130-residue protein sequence, read N- to C-terminus: Small ribosomal subunit protein uS8 (130 aa).

Belongs to the universal ribosomal protein uS8 family. Part of the 30S ribosomal subunit. Contacts proteins S5 and S12.

In terms of biological role, one of the primary rRNA binding proteins, it binds directly to 16S rRNA central domain where it helps coordinate assembly of the platform of the 30S subunit. This is Small ribosomal subunit protein uS8 from Wigglesworthia glossinidia brevipalpis.